The primary structure comprises 482 residues: PHD finger protein At3g20280 (482 aa).

The PHD-type zinc finger occupies 45–97; that stretch reads AMACQICEVTINEMDTLLICDACEKAYHLKCLQGNNMKGVPKSEWHCSRCVQA. Disordered regions lie at residues 188–210 and 314–482; these read TNIG…APVS and SSNS…ENAA. Over residues 314–324 the composition is skewed to low complexity; it reads SSNSQQAVSHS. 2 stretches are compositionally biased toward polar residues: residues 377–386 and 393–428; these read ACQNHPTASP and QDST…NYDS. Over residues 447-482 the composition is skewed to basic and acidic residues; sequence DSEKGKGLNGLDDRHQEQPSEPEFYKSDSVKEENAA.

The sequence is that of PHD finger protein At3g20280 from Arabidopsis thaliana (Mouse-ear cress).